Here is a 413-residue protein sequence, read N- to C-terminus: CCA-adding enzyme (413 aa).

Residues serine 42 and lysine 45 each coordinate ATP. Serine 42 and lysine 45 together coordinate CTP. 3 residues coordinate Mg(2+): aspartate 54, aspartate 56, and aspartate 107. ATP-binding residues include histidine 130, lysine 150, and tyrosine 159. Positions 130, 150, and 159 each coordinate CTP.

This sequence belongs to the tRNA nucleotidyltransferase/poly(A) polymerase family. Archaeal CCA-adding enzyme subfamily. Homodimer. The cofactor is Mg(2+).

The enzyme catalyses a tRNA precursor + 2 CTP + ATP = a tRNA with a 3' CCA end + 3 diphosphate. It catalyses the reaction a tRNA with a 3' CCA end + 2 CTP + ATP = a tRNA with a 3' CCACCA end + 3 diphosphate. Functionally, catalyzes the addition and repair of the essential 3'-terminal CCA sequence in tRNAs without using a nucleic acid template. Adds these three nucleotides in the order of C, C, and A to the tRNA nucleotide-73, using CTP and ATP as substrates and producing inorganic pyrophosphate. tRNA 3'-terminal CCA addition is required both for tRNA processing and repair. Also involved in tRNA surveillance by mediating tandem CCA addition to generate a CCACCA at the 3' terminus of unstable tRNAs. While stable tRNAs receive only 3'-terminal CCA, unstable tRNAs are marked with CCACCA and rapidly degraded. The polypeptide is CCA-adding enzyme (Sulfurisphaera tokodaii (strain DSM 16993 / JCM 10545 / NBRC 100140 / 7) (Sulfolobus tokodaii)).